Here is a 161-residue protein sequence, read N- to C-terminus: MKIRGRAIVYGDKIDTDVIIPAKYLVYTDPNILGQHAMEPIDPEFPKKAKGAILVAGRAFGMGSSREQAAIALKGAGVLAVVAESFARIFFRNAINIGLPVLQVPEITKKVKEGEELEVDIENGYCINLATGEKIEGKPIRGLPLAILKAGGLTNYLKSLR.

Belongs to the LeuD family. LeuD type 2 subfamily. Heterodimer of LeuC and LeuD.

It carries out the reaction (2R,3S)-3-isopropylmalate = (2S)-2-isopropylmalate. It functions in the pathway amino-acid biosynthesis; L-leucine biosynthesis; L-leucine from 3-methyl-2-oxobutanoate: step 2/4. Catalyzes the isomerization between 2-isopropylmalate and 3-isopropylmalate, via the formation of 2-isopropylmaleate. This Pyrobaculum islandicum (strain DSM 4184 / JCM 9189 / GEO3) protein is 3-isopropylmalate dehydratase small subunit.